Reading from the N-terminus, the 252-residue chain is Imidazole glycerol phosphate synthase subunit HisF (252 aa).

Catalysis depends on residues Asp11 and Asp130.

This sequence belongs to the HisA/HisF family. In terms of assembly, heterodimer of HisH and HisF.

The protein resides in the cytoplasm. It catalyses the reaction 5-[(5-phospho-1-deoxy-D-ribulos-1-ylimino)methylamino]-1-(5-phospho-beta-D-ribosyl)imidazole-4-carboxamide + L-glutamine = D-erythro-1-(imidazol-4-yl)glycerol 3-phosphate + 5-amino-1-(5-phospho-beta-D-ribosyl)imidazole-4-carboxamide + L-glutamate + H(+). It participates in amino-acid biosynthesis; L-histidine biosynthesis; L-histidine from 5-phospho-alpha-D-ribose 1-diphosphate: step 5/9. IGPS catalyzes the conversion of PRFAR and glutamine to IGP, AICAR and glutamate. The HisF subunit catalyzes the cyclization activity that produces IGP and AICAR from PRFAR using the ammonia provided by the HisH subunit. This Hyphomonas neptunium (strain ATCC 15444) protein is Imidazole glycerol phosphate synthase subunit HisF.